Reading from the N-terminus, the 940-residue chain is UvrABC system protein A (940 aa).

31 to 38 contributes to the ATP binding site; that stretch reads GLSGSGKS. A C4-type zinc finger spans residues 252-279; the sequence is CPHCGYSMRELEPRLFSFNNPAGACPTC. 2 ABC transporter domains span residues 309–586 and 606–936; these read WDQK…PNSL and KDAK…RFLK. 639–646 is a binding site for ATP; that stretch reads GVSGSGKS. The C4-type zinc finger occupies 739–765; sequence CEACQGDGVIKVEMHFLPDVYVPCDVC.

The protein belongs to the ABC transporter superfamily. UvrA family. In terms of assembly, forms a heterotetramer with UvrB during the search for lesions.

Its subcellular location is the cytoplasm. The UvrABC repair system catalyzes the recognition and processing of DNA lesions. UvrA is an ATPase and a DNA-binding protein. A damage recognition complex composed of 2 UvrA and 2 UvrB subunits scans DNA for abnormalities. When the presence of a lesion has been verified by UvrB, the UvrA molecules dissociate. The sequence is that of UvrABC system protein A from Vibrio cholerae serotype O1 (strain ATCC 39315 / El Tor Inaba N16961).